A 66-amino-acid chain; its full sequence is Large ribosomal subunit protein uL29 (66 aa).

It belongs to the universal ribosomal protein uL29 family.

The sequence is that of Large ribosomal subunit protein uL29 from Borreliella burgdorferi (strain ZS7) (Borrelia burgdorferi).